The following is a 492-amino-acid chain: Glutamyl-tRNA(Gln) amidotransferase subunit A (492 aa).

Catalysis depends on charge relay system residues K78 and S158. The Acyl-ester intermediate role is filled by S182.

Belongs to the amidase family. GatA subfamily. In terms of assembly, heterotrimer of A, B and C subunits.

It carries out the reaction L-glutamyl-tRNA(Gln) + L-glutamine + ATP + H2O = L-glutaminyl-tRNA(Gln) + L-glutamate + ADP + phosphate + H(+). In terms of biological role, allows the formation of correctly charged Gln-tRNA(Gln) through the transamidation of misacylated Glu-tRNA(Gln) in organisms which lack glutaminyl-tRNA synthetase. The reaction takes place in the presence of glutamine and ATP through an activated gamma-phospho-Glu-tRNA(Gln). The protein is Glutamyl-tRNA(Gln) amidotransferase subunit A of Orientia tsutsugamushi (strain Boryong) (Rickettsia tsutsugamushi).